Here is a 342-residue protein sequence, read N- to C-terminus: Ribosomal RNA small subunit methyltransferase C (342 aa).

It belongs to the methyltransferase superfamily. RsmC family. Monomer.

It localises to the cytoplasm. The catalysed reaction is guanosine(1207) in 16S rRNA + S-adenosyl-L-methionine = N(2)-methylguanosine(1207) in 16S rRNA + S-adenosyl-L-homocysteine + H(+). Functionally, specifically methylates the guanine in position 1207 of 16S rRNA in the 30S particle. The chain is Ribosomal RNA small subunit methyltransferase C from Salmonella choleraesuis (strain SC-B67).